The sequence spans 677 residues: Methionine--tRNA ligase (677 aa).

A 'HIGH' region motif is present at residues 15 to 25 (PYANGSIHLGH). 4 residues coordinate Zn(2+): Cys146, Cys149, Cys159, and Cys162. The 'KMSKS' region motif lies at 333–337 (KMSKS). Lys336 contributes to the ATP binding site. Positions 575 to 677 (DFAKIDLRVA…DGAKPGQQVK (103 aa)) constitute a tRNA-binding domain.

This sequence belongs to the class-I aminoacyl-tRNA synthetase family. MetG type 1 subfamily. As to quaternary structure, homodimer. Zn(2+) is required as a cofactor.

It is found in the cytoplasm. The catalysed reaction is tRNA(Met) + L-methionine + ATP = L-methionyl-tRNA(Met) + AMP + diphosphate. Functionally, is required not only for elongation of protein synthesis but also for the initiation of all mRNA translation through initiator tRNA(fMet) aminoacylation. The protein is Methionine--tRNA ligase of Salmonella paratyphi B (strain ATCC BAA-1250 / SPB7).